The primary structure comprises 238 residues: Fish-egg lectin (238 aa).

5 consecutive repeat copies span residues Leu-1 to Asp-34, Asn-35 to Ser-68, Gly-69 to Asn-106, Asn-107 to Ser-156, and Gly-157 to Gly-199. Positions Leu-1 to Gly-199 are 5 X approximate tandem repeats. 4 cysteine pairs are disulfide-bonded: Cys-3–Cys-234, Cys-100–Cys-153, Cys-128–Cys-133, and Cys-208–Cys-226. Asn-27 is a glycosylation site (N-linked (GlcNAc...) asparagine).

The protein belongs to the tectonin family. In terms of tissue distribution, expressed in the eggs.

It is found in the secreted. In terms of biological role, lipopolysaccharide-binding protein with a very low agglutinating activity for human A-type erythrocytes and interacts with both Gram-positive and Gram-negative bacteria. This Cyprinus carpio (Common carp) protein is Fish-egg lectin.